We begin with the raw amino-acid sequence, 292 residues long: AhcY transcriptional activator HvrB (292 aa).

Positions P10–T67 constitute an HTH lysR-type domain. A DNA-binding region (H-T-H motif) is located at residues F27 to R46.

The protein belongs to the LysR transcriptional regulatory family.

Its function is as follows. Functions as a low-light activator of ahcY expression (gene for S-adenosyl-L-homocysteine hydrolase) and as a high-light activator of an uncharacterized 21.6 kDa protein in the ahcY-hvrB intergenic region (orf5). It is also a negative regulator of its own expression. This Rhodobacter capsulatus (strain ATCC BAA-309 / NBRC 16581 / SB1003) protein is AhcY transcriptional activator HvrB (hvrB).